A 388-amino-acid polypeptide reads, in one-letter code: DNA replication and repair protein RecF (388 aa).

30 to 37 (GANGNGKT) is a binding site for ATP.

This sequence belongs to the RecF family.

It localises to the cytoplasm. Its function is as follows. The RecF protein is involved in DNA metabolism; it is required for DNA replication and normal SOS inducibility. RecF binds preferentially to single-stranded, linear DNA. It also seems to bind ATP. The sequence is that of DNA replication and repair protein RecF from Nocardia farcinica (strain IFM 10152).